A 213-amino-acid polypeptide reads, in one-letter code: MTRLVLGSASAGRLKVLRQAGIDPLVAASGVDEDLVTAGLGSDTSPRDVVSTLARAKATQVAAALSHAVADDCVVISCDSQLSIDGRLYGKPQSVANARQQWQSMAGRAGQLYTGHCVIRLLNNETTYSVDETSMTTICFGNPSAEDLEAYLACGESLQVAGGFTLDGLGGWFIDAVYGDPSTVVGIGLPLTRSLLSRAGLSIAAMWAANPVI.

The active-site Proton acceptor is aspartate 79.

It belongs to the Maf family. Requires a divalent metal cation as cofactor.

The protein resides in the cytoplasm. The enzyme catalyses a ribonucleoside 5'-triphosphate + H2O = a ribonucleoside 5'-phosphate + diphosphate + H(+). The catalysed reaction is a 2'-deoxyribonucleoside 5'-triphosphate + H2O = a 2'-deoxyribonucleoside 5'-phosphate + diphosphate + H(+). Its function is as follows. Nucleoside triphosphate pyrophosphatase. May have a dual role in cell division arrest and in preventing the incorporation of modified nucleotides into cellular nucleic acids. The protein is Nucleoside triphosphate pyrophosphatase of Mycobacterium leprae (strain Br4923).